The following is a 649-amino-acid chain: Endoplasmic reticulum membrane protein 65 (649 aa).

Residues 1–55 (MGSNTSPGQADPLESENESSLTSRFLPNKRDGGKDNESVIPEKEEPDLNEPVLAV) form a disordered region. Residues 1-165 (MGSNTSPGQA…LATPYAIEKT (165 aa)) are Cytoplasmic-facing. Residues 28 to 43 (NKRDGGKDNESVIPEK) are compositionally biased toward basic and acidic residues. The residue at position 94 (Ser94) is a Phosphoserine. The helical transmembrane segment at 166-186 (FLFGWFVSVDSFLYIFTLFPI) threads the bilayer. Over 187–302 (RVLISFFTLS…NFWNPAGWMT (116 aa)) the chain is Lumenal. Asn215 is a glycosylation site (N-linked (GlcNAc...) asparagine). Residues 303–323 (FFYYFAISLAYMVLHTLVLLY) form a helical membrane-spanning segment. Residues 324-366 (QIITLNVTVNSYSNAVLALLMSNQLVEIKGAVFKKFEKENLFQ) lie on the Cytoplasmic side of the membrane. Residues 367 to 387 (LTCSDVVERFQITIMVIIIFL) traverse the membrane as a helical segment. Over 388–414 (RNLAELYTTSSLDQPLLTFKRLKTLLA) the chain is Lumenal. Residues 415 to 435 (PFFWVIGSELFVDWLKHAFII) traverse the membrane as a helical segment. Residues 436-479 (KFNYIKPSIYSRFTDVLCHDYVASGAQLTQTVTGCSQQVARRMG) are Cytoplasmic-facing. Residues 480-500 (LPVLPLVCVFIRTSMQTWSMF) traverse the membrane as a helical segment. Over 501–557 (RSTHSMKQEIAKSIGTIFPTKDNYVYYLPNKEANTYNAGKEASWETLLLSVVRGKSG) the chain is Lumenal. The helical transmembrane segment at 558-578 (IAFLFFMAIMLKLLLGKAILA) threads the bilayer. Residues 579-649 (ITQSRYESMQ…RYAMHSKRIW (71 aa)) are Cytoplasmic-facing.

This sequence belongs to the TAPT1 family. In terms of assembly, interacts with slp1.

The protein localises to the endoplasmic reticulum membrane. In terms of biological role, may be involved in membrane protein folding. The sequence is that of Endoplasmic reticulum membrane protein 65 from Schizosaccharomyces pombe (strain 972 / ATCC 24843) (Fission yeast).